The chain runs to 315 residues: Methionyl-tRNA formyltransferase (315 aa).

Position 111-114 (111-114 (SLLP)) interacts with (6S)-5,6,7,8-tetrahydrofolate.

Belongs to the Fmt family.

The catalysed reaction is L-methionyl-tRNA(fMet) + (6R)-10-formyltetrahydrofolate = N-formyl-L-methionyl-tRNA(fMet) + (6S)-5,6,7,8-tetrahydrofolate + H(+). Its function is as follows. Attaches a formyl group to the free amino group of methionyl-tRNA(fMet). The formyl group appears to play a dual role in the initiator identity of N-formylmethionyl-tRNA by promoting its recognition by IF2 and preventing the misappropriation of this tRNA by the elongation apparatus. The chain is Methionyl-tRNA formyltransferase from Chlorobium phaeobacteroides (strain DSM 266 / SMG 266 / 2430).